Reading from the N-terminus, the 165-residue chain is NADPH-dependent 7-cyano-7-deazaguanine reductase (165 aa).

The Thioimide intermediate role is filled by C56. The Proton donor role is filled by D63. Substrate-binding positions include 78–80 (VES) and 97–98 (HE).

The protein belongs to the GTP cyclohydrolase I family. QueF type 1 subfamily.

The protein localises to the cytoplasm. The enzyme catalyses 7-aminomethyl-7-carbaguanine + 2 NADP(+) = 7-cyano-7-deazaguanine + 2 NADPH + 3 H(+). It participates in tRNA modification; tRNA-queuosine biosynthesis. Functionally, catalyzes the NADPH-dependent reduction of 7-cyano-7-deazaguanine (preQ0) to 7-aminomethyl-7-deazaguanine (preQ1). In Bacillus mycoides (strain KBAB4) (Bacillus weihenstephanensis), this protein is NADPH-dependent 7-cyano-7-deazaguanine reductase.